We begin with the raw amino-acid sequence, 414 residues long: tRNA N6-adenosine threonylcarbamoyltransferase, mitochondrial (414 aa).

The N-terminal 29 residues, 1-29, are a transit peptide targeting the mitochondrion; that stretch reads MLMLSKTAGAIPRPPRSNVRGFIRRFNVQ. N6-acetyllysine occurs at positions 74 and 140. Positions 147 and 151 each coordinate a divalent metal cation. Residues 169 to 173 and Asp-202 contribute to the substrate site; that span reads LISGG. Lys-203 is modified (N6-acetyllysine). Substrate contacts are provided by Gly-222 and Glu-226. 2 positions are modified to N6-acetyllysine: Lys-230 and Lys-299. Substrate-binding positions include 329-330 and Thr-357; that span reads SN. Asp-358 is a binding site for a divalent metal cation.

Belongs to the KAE1 / TsaD family. As to quaternary structure, monomer. A divalent metal cation is required as a cofactor.

The protein resides in the mitochondrion. It catalyses the reaction L-threonylcarbamoyladenylate + adenosine(37) in tRNA = N(6)-L-threonylcarbamoyladenosine(37) in tRNA + AMP + H(+). In terms of biological role, required for the formation of a threonylcarbamoyl group on adenosine at position 37 (t(6)A37) in mitochondrial tRNAs that read codons beginning with adenine. Probably involved in the transfer of the threonylcarbamoyl moiety of threonylcarbamoyl-AMP (TC-AMP) to the N6 group of A37. Involved in mitochondrial genome maintenance. The sequence is that of tRNA N6-adenosine threonylcarbamoyltransferase, mitochondrial from Rattus norvegicus (Rat).